Reading from the N-terminus, the 392-residue chain is tRNA(Met) cytidine acetate ligase (392 aa).

Residues 7-20 (VVEY…HQLH), Gly-101, Asn-162, and 187-188 (RI) contribute to the ATP site.

The protein belongs to the TmcAL family.

Its subcellular location is the cytoplasm. The catalysed reaction is cytidine(34) in elongator tRNA(Met) + acetate + ATP = N(4)-acetylcytidine(34) in elongator tRNA(Met) + AMP + diphosphate. Catalyzes the formation of N(4)-acetylcytidine (ac(4)C) at the wobble position of elongator tRNA(Met), using acetate and ATP as substrates. First activates an acetate ion to form acetyladenylate (Ac-AMP) and then transfers the acetyl group to tRNA to form ac(4)C34. In Listeria welshimeri serovar 6b (strain ATCC 35897 / DSM 20650 / CCUG 15529 / CIP 8149 / NCTC 11857 / SLCC 5334 / V8), this protein is tRNA(Met) cytidine acetate ligase.